Consider the following 360-residue polypeptide: Farnesyl pyrophosphate synthase (360 aa).

Lysine 52, arginine 55, and glutamine 90 together coordinate isopentenyl diphosphate. Aspartate 97 and aspartate 101 together coordinate Mg(2+). Arginine 106 is a dimethylallyl diphosphate binding site. Residue arginine 107 coordinates isopentenyl diphosphate. 5 residues coordinate dimethylallyl diphosphate: lysine 194, threonine 195, glutamine 237, lysine 254, and lysine 263.

The protein belongs to the FPP/GGPP synthase family. Requires Mg(2+) as cofactor.

The enzyme catalyses isopentenyl diphosphate + dimethylallyl diphosphate = (2E)-geranyl diphosphate + diphosphate. It catalyses the reaction isopentenyl diphosphate + (2E)-geranyl diphosphate = (2E,6E)-farnesyl diphosphate + diphosphate. Its pathway is isoprenoid biosynthesis; farnesyl diphosphate biosynthesis; farnesyl diphosphate from geranyl diphosphate and isopentenyl diphosphate: step 1/1. The protein operates within isoprenoid biosynthesis; geranyl diphosphate biosynthesis; geranyl diphosphate from dimethylallyl diphosphate and isopentenyl diphosphate: step 1/1. Its function is as follows. Farnesyl pyrophosphate synthase; part of the second module of ergosterol biosynthesis pathway that includes the middle steps of the pathway. The second module involves the formation of farnesyl diphosphate, which is also an important intermediate in the biosynthesis of ubiquinone, dolichol, heme and prenylated proteins. This module also plays a key role in the biosynthesis of triterpenes such as ganoderic acids (GA), a group of highly oxygenated lanostane-type triterpenoids which are well recognized as a main group of unique bioactive compounds in the medicinal mushroom Ganoderma lucidum. Activity by the mevalonate kinase first converts mevalonate into 5-phosphomevalonate. 5-phosphomevalonate is then further converted to 5-diphosphomevalonate by the phosphomevalonate kinase. The diphosphomevalonate decarboxylase MVD then produces isopentenyl diphosphate. The isopentenyl-diphosphate delta-isomerase then catalyzes the 1,3-allylic rearrangement of the homoallylic substrate isopentenyl (IPP) to its highly electrophilic allylic isomer, dimethylallyl diphosphate (DMAPP). Finally the farnesyl diphosphate synthase FPS catalyzes the sequential condensation of isopentenyl pyrophosphate with dimethylallyl pyrophosphate, and then with the resultant geranylpyrophosphate to the ultimate product farnesyl pyrophosphate. This chain is Farnesyl pyrophosphate synthase, found in Ganoderma lucidum (Ling zhi medicinal fungus).